The sequence spans 507 residues: Cyclic GMP-AMP synthase (507 aa).

The tract at residues 1-146 (MEDPRRRTTA…PRAPRGSRKE (146 aa)) is DNA-binding. The disordered stretch occupies residues 1–151 (MEDPRRRTTA…GSRKEPDKLK (151 aa)). Residues 7-18 (RTTAPRAKKPSA) are compositionally biased toward basic residues. The segment covering 44 to 57 (RRAERDGDTTEKPR) has biased composition (basic and acidic residues). The tract at residues 48–59 (RDGDTTEKPRAP) is required for association with the cell membrane. The residue at position 52 (Thr-52) is a Phosphothreonine. A required for activation upon DNA viral infection region spans residues 119 to 132 (RKVVRGPSHRRGAR). Over residues 121 to 131 (VVRGPSHRRGA) the composition is skewed to basic residues. A Nuclear export signal motif is present at residues 154–159 (LDKLRL). N6-lactoyllysine is present on Lys-156. The DNA-binding stretch occupies residues 158 to 201 (RLKRKDISEAAETVNKVVERLLRRMQKRESEFKGVEQLNTGSYY). A PolyADP-ribosyl glutamic acid modification is found at Glu-176. Residue Thr-197 participates in GTP binding. Ser-199 lines the ATP pocket. Phosphoserine is present on Ser-199. Tyr-201 carries the phosphotyrosine modification. Residues Glu-211 and Asp-213 each contribute to the Mg(2+) site. Asp-213 serves as a coordination point for 2',3'-cGAMP. Lys-217 is covalently cross-linked (Glycyl lysine isopeptide (Lys-Gly) (interchain with G-Cter in SUMO)). Residue Lys-271 forms a Glycyl lysine isopeptide (Lys-Gly) (interchain with G-Cter in ubiquitin) linkage. A 5-glutamyl polyglutamate modification is found at Glu-272. The Nuclear localization signal motif lies at 281 to 291 (DVSVEKEKPGS). A 2',3'-cGAMP-binding site is contributed by Gly-290. A Phosphoserine; by CDK1 and PKB modification is found at Ser-291. Residue Glu-302 is modified to 5-glutamyl glutamate. Position 307 (Asp-307) interacts with GTP. Asp-307 is a Mg(2+) binding site. A 2',3'-cGAMP-binding site is contributed by Asp-307. The interval 329 to 370 (QGWLGTKVRTNLRREPFYLVPKNAKDGNSFQGETWRLSFSHT) is interaction with collided ribosomes. Residue Lys-335 forms a Glycyl lysine isopeptide (Lys-Gly) (interchain with G-Cter in SUMO); alternate linkage. A Glycyl lysine isopeptide (Lys-Gly) (interchain with G-Cter in ubiquitin); alternate cross-link involves residue Lys-335. Residues Lys-350 and 364 to 366 (RLS) contribute to the 2',3'-cGAMP site. 364 to 371 (RLSFSHTE) contributes to the GTP binding site. Glu-371 provides a ligand contact to ATP. Residue Lys-372 forms a Glycyl lysine isopeptide (Lys-Gly) (interchain with G-Cter in SUMO); alternate linkage. Lys-372 is covalently cross-linked (Glycyl lysine isopeptide (Lys-Gly) (interchain with G-Cter in ubiquitin); alternate). At Lys-372 the chain carries N6-acetyllysine. Positions 372–395 (KYILNNHGIEKTCCESSGAKCCRK) are DNA-binding. His-378 contributes to the Zn(2+) binding site. Lys-382 participates in a covalent cross-link: Glycyl lysine isopeptide (Lys-Gly) (interchain with G-Cter in SUMO). N6-acetyllysine is present on Lys-382. Residues Cys-384, Cys-385, and Cys-392 each coordinate Zn(2+). Residues Cys-392 and Cys-393 are each lipidated (S-palmitoyl cysteine). Residues Lys-399, Lys-402, Lys-409, and Lys-410 each participate in a glycyl lysine isopeptide (Lys-Gly) (interchain with G-Cter in ubiquitin) cross-link. Lys-402 lines the ATP pocket. Residue Lys-402 is modified to N6-acetyllysine. Phosphoserine is present on Ser-420. An ATP-binding site is contributed by 420–424 (SYHVK). Cys-459 carries S-palmitoyl cysteine lipidation. Lys-464 is covalently cross-linked (Glycyl lysine isopeptide (Lys-Gly) (interchain with G-Cter in SUMO); alternate). Lys-464 is covalently cross-linked (Glycyl lysine isopeptide (Lys-Gly) (interchain with G-Cter in ubiquitin); alternate). N6-methyllysine is present on Lys-491.

Belongs to the mab-21 family. In terms of assembly, monomer in the absence of DNA. Homodimer in presence of dsDNA: forms a 2:2 dimer with two enzymes binding to two DNA molecules. Interacts with nucleosomes; interaction is mainly mediated via histones H2A and H2B and inactivates the nucleotidyltransferase activity by blocking DNA-binding and subsequent activation. Interacts with PQBP1 (via WW domain). Interacts with TRIM14; this interaction recruits USP14, leading to deubiquitinate and stabilize CGAS and promote type I interferon production. Interacts with ZCCHC3; promoting sensing of dsDNA by CGAS. Interacts (when not monomethylated) with (poly-ADP-ribosylated) PARP1; interaction takes place in the nucleus and prevents the formation of the PARP1-TIMELESS complex. Interacts (when monomethylated) with SGF29; interaction with SGF29 prevents interaction with PARP1. Interacts with PCBP2; preventing the formation of liquid-like droplets in which CGAS is activated. Interacts with Irgm1; promoting CGAS degradation. Interacts with DDX41. Mg(2+) is required as a cofactor. It depends on Mn(2+) as a cofactor. The cofactor is Zn(2+). The N-terminal disordered part (1-146) is phosphorylated by AURKB during the G2-M transition, blocking CGAS liquid phase separation and preventing activation. Phosphorylation at Tyr-201 by BLK promotes cytosolic retention. Localizes into the nucleus following dephosphorylation at Tyr-201. Phosphorylation at Ser-420 activates the nucleotidyltransferase activity. Dephosphorylation at Ser-420 by PPP6C impairs its ability to bind GTP, thereby inactivating it. Phosphorylation at Thr-52 and Ser-199 by PRKDC inhibits its cyclic GMP-AMP synthase activity by impairing homodimerization and activation. Phosphorylation at Ser-291 by AKT (AKT1, AKT2 or AKT3) suppresses the nucleotidyltransferase activity. Phosphorylation at Ser-291 by CDK1 during mitosis leads to its inhibition, thereby preventing CGAS activation by self-DNA during mitosis. Dephosphorylated at Ser-291 by protein phosphatase PP1 upon mitotic exit. In terms of processing, ubiquitinated at Lys-402 via 'Lys-48'-linked polyubiquitin chains, leading to its SQSTM1-mediated autophagic degradation. Interaction with TRIM14 promotes recruitment of USP14, leading to deubiquitinate Lys-402 and stabilize CGAS. Ubiquitinated at Lys-372 by RNF185 via 'Lys-27'-linked polyubiquitination, promoting CGAS cyclic GMP-AMP synthase activity. Monoubiquitination at Lys-335 by TRIM56 promotes oligomerization and subsequent activation. Monoubiquitination by TRIM41 promotes CGAS activation. Ubiquitination at Lys-271 and Lys-464 via 'Lys-48'-linked polyubiquitination promotes its degradation. Deubiquitination at Lys-271 by USP29 promotes its stabilization. Deubiquitinated by USP27X, promoting its stabilization. Ubiquitinated at Lys-399 via 'Lys-63'-linked polyubiquitin chains by MARCHF8, leading to the inhibition of its DNA binding ability. In cycling cells, nucleosome-bound CGAS is ubiquitinated at Lys-409 and Lys-410 via 'Lys-48'-linked polyubiquitin chains by the ECS(SPSB3) complex, leading to its degradation: ubiquitination and degradation of nuclear CGAS during G1 and G2 phases is required to promote low intranuclear CGAS abundance before the next mitotic cycle. Post-translationally, sumoylated at Lys-217 and Lys-464 by TRIM38 in uninfected cells and during the early phase of viral infection, promoting its stability by preventing ubiquitination at Lys-271 and Lys-464, and subsequent degradation. Desumoylated by SENP2 during the late phase of viral infection. Sumoylation at Lys-335, Lys-372 and Lys-382 prevents DNA-binding, oligomerization and nucleotidyltransferase activity. Desumoylation at Lys-335, Lys-372 and Lys-382 by SENP7 relieves inhibition and activates CGAS. Polyglutamylated by TTLL6 at Glu-272, leading to impair DNA-binding activity. Monoglutamylated at Glu-302 by TTLL4, leading to impair the nucleotidyltransferase activity. Deglutamylated by AGBL5/CCP5 and AGBL6/CCP6. In terms of processing, acetylation at Lys-372, Lys-382 and Lys-402 inhibits the cyclic GMP-AMP synthase activity. Deacetylated upon cytosolic DNA challenge such as viral infections. Acetylation by KAT5 increases the cyclic GMP-AMP synthase activity by promoting DNA-binding and subsequent activation. Post-translationally, proteolytically cleaved by apoptotic caspases during apoptosis, leading to its inactivation. The damage of the nucleus and the mitochondria during apoptosis leads to leakage of nuclear and mitochondrial DNA, which activate CGAS: cleavage and inactivation during apoptosis in required to prevent cytokine overproduction. Cleaved by CASP7 and CASP3 during virus-induced apoptosis, thereby inactivating it and preventing cytokine overproduction. Cleaved by CASP1 upon DNA virus infection; the cleavage impairs cGAMP production. Also cleaved by the pyroptotic CASP4 during non-canonical inflammasome activation; does not cut at the same sites than CASP1. Degraded via selective autophagy following interaction with Irgm1. Irgm1 promotes CGAS recruitment to autophagosome membranes, promoting its SQSTM1/p62-dependent autophagic degradation. In terms of processing, poly-ADP-ribosylation at Glu-176 by PARP1 impairs DNA-binding, thereby preventing the cyclic GMP-AMP synthase activity. Post-translationally, palmitoylation at Cys-459 by ZDHHC18 impairs DNA-binding, thereby preventing the cyclic GMP-AMP synthase activity. Palmitoylation at Cys-392 and Cys-393 by ZDHHC9 promotes homodimerization and cyclic GMP-AMP synthase activity. Depalmitoylation at Cys-392 and Cys-393 by LYPLAL1 impairs homodimerization and cyclic GMP-AMP synthase activity. Monomethylated at Lys-491 by SETD7. Monomethylation promotes interaction with SGF29, preventing interaction between PARP1 nad SGF29. Demethylation by RIOX1 promotes interaction with PARP1, followed by PARP1 inactivation. In terms of processing, lactylation by AARS2 prevents ability to undergo liquid-liquid phase separation (LLPS), thereby inhibiting CGAS activation.

It localises to the nucleus. Its subcellular location is the chromosome. The protein resides in the cell membrane. It is found in the cytoplasm. The protein localises to the cytosol. It carries out the reaction GTP + ATP = 2',3'-cGAMP + 2 diphosphate. It catalyses the reaction GTP + ATP = pppGp(2'-5')A + diphosphate. The catalysed reaction is pppGp(2'-5')A = 2',3'-cGAMP + diphosphate. The enzyme activity is strongly increased by double-stranded DNA (dsDNA), but not by single-stranded DNA or RNA. DNA-binding induces the formation of liquid-like droplets in which CGAS is activated. Liquid-like droplets also create a selective environment that restricts entry of negative regulators, such as TREX1 or BANF1/BAF, allowing sensing of DNA. A number of mechanisms exist to restrict its activity toward self-DNA. The nucleotidyltransferase activity is inhibited in the nucleus via its association with nucleosomes: interacts with the acidic patch of histones H2A and H2B, thereby blocking DNA-binding and subsequent activation. CGAS is also inactive when associated with mitotic chromatin. Chromatin-bound CGAS cannot be activated by exogenous DNA in mitotic cells: phosphorylation of the N-terminal disordered part by AURKB during the G2-M transition blocks CGAS liquid phase separation and activation. Activity toward self-DNA is inhibited by BANF1/BAF upon acute loss of nuclear membrane integrity: BANF1/BAF acts by outcompeting CGAS for DNA-binding, thereby preventing CGAS activation. DNA-induced activation at micronuclei is also limited by TREX1, which degrades micronuclear DNA upon nuclear envelope rupture, thereby preventing CGAS activation. CGAS can be released from nucleosomes and activated by MRE11 component of the MRN complex, which displaces CGAS from acidic-patch-mediated sequestration. Acetylation at Lys-372, Lys-382 and Lys-402 inhibits the cyclic GMP-AMP synthase activity. Acetylation by KAT5 increases the cyclic GMP-AMP synthase activity by promoting DNA-binding and subsequent activation. Phosphorylation at Ser-291 suppresses the nucleotidyltransferase activity. Phosphorylation at Ser-420 promotes the cyclic GMP-AMP synthase activity. Phosphorylation at Thr-52 and Ser-199 inhibits its cyclic GMP-AMP synthase activity. Ubiquitination at Lys-372 via 'Lys-27'-linked polyubiquitination enhances the cyclic GMP-AMP synthase activity. Monoubiquitination at Lys-335 promotes oligomerization and subsequent activation. Sumoylation at Lys-335, Lys-372 and Lys-382 prevents DNA-binding, oligomerization and nucleotidyltransferase activity. The enzyme activity is impaired by the cleavage by CASP1. In addition to DNA, also activated by collided ribosomes upon translation stress: specifically binds collided ribosomes, promoting its activation and triggering type-I interferon production. In hematopoietic stem cells, binding to circular RNA cia-cGAS inhibits the cyclic GMP-AMP synthase activity. Strongly inhibited by compound RU.521, which is specific for mouse protein. Its function is as follows. Nucleotidyltransferase that catalyzes the formation of cyclic GMP-AMP (2',3'-cGAMP) from ATP and GTP and plays a key role in innate immunity. Catalysis involves both the formation of a 2',5' phosphodiester linkage at the GpA step and the formation of a 3',5' phosphodiester linkage at the ApG step, producing c[G(2',5')pA(3',5')p]. Acts as a key DNA sensor: directly binds double-stranded DNA (dsDNA), inducing the formation of liquid-like droplets in which CGAS is activated, leading to synthesis of 2',3'-cGAMP, a second messenger that binds to and activates STING1, thereby triggering type-I interferon production. Preferentially binds long dsDNA (around 45 bp) and forms ladder-like networks that function cooperatively to stabilize individual cGAS-dsDNA complexes. Acts as a key foreign DNA sensor, the presence of double-stranded DNA (dsDNA) in the cytoplasm being a danger signal that triggers the immune responses. Has antiviral activity by sensing the presence of dsDNA from DNA viruses in the cytoplasm. Also acts as an innate immune sensor of infection by retroviruses by detecting the presence of reverse-transcribed DNA in the cytosol. Detection of retroviral reverse-transcribed DNA in the cytosol may be indirect and be mediated via interaction with PQBP1, which directly binds reverse-transcribed retroviral DNA. Also detects the presence of DNA from bacteria. 2',3'-cGAMP can be transferred from producing cells to neighboring cells through gap junctions, leading to promote STING1 activation and convey immune response to connecting cells. 2',3'-cGAMP can also be transferred between cells by virtue of packaging within viral particles contributing to IFN-induction in newly infected cells in a cGAS-independent but STING1-dependent manner. Also senses the presence of neutrophil extracellular traps (NETs) that are translocated to the cytosol following phagocytosis, leading to synthesis of 2',3'-cGAMP. In addition to foreign DNA, can also be activated by endogenous nuclear or mitochondrial DNA. When self-DNA leaks into the cytosol during cellular stress (such as mitochondrial stress, DNA damage, mitotic arrest or senescence), or is present in form of cytosolic micronuclei, CGAS is activated leading to a state of sterile inflammation. Acts as a regulator of cellular senescence by binding to cytosolic chromatin fragments that are present in senescent cells, leading to trigger type-I interferon production via STING1 and promote cellular senescence. Also involved in the inflammatory response to genome instability and double-stranded DNA breaks: acts by localizing to micronuclei arising from genome instability. Micronuclei, which as frequently found in cancer cells, consist of chromatin surrounded by its own nuclear membrane: following breakdown of the micronuclear envelope, a process associated with chromothripsis, CGAS binds self-DNA exposed to the cytosol, leading to 2',3'-cGAMP synthesis and subsequent activation of STING1 and type-I interferon production. In a healthy cell, CGAS is however kept inactive even in cellular events that directly expose it to self-DNA, such as mitosis, when cGAS associates with chromatin directly after nuclear envelope breakdown or remains in the form of postmitotic persistent nuclear cGAS pools bound to chromatin. Nuclear CGAS is inactivated by chromatin via direct interaction with nucleosomes, which block CGAS from DNA binding and thus prevent CGAS-induced autoimmunity. Also acts as a suppressor of DNA repair in response to DNA damage: inhibits homologous recombination repair by interacting with PARP1, the CGAS-PARP1 interaction leading to impede the formation of the PARP1-TIMELESS complex. In addition to DNA, also sense translation stress: in response to translation stress, translocates to the cytosol and associates with collided ribosomes, promoting its activation and triggering type-I interferon production. In Mus musculus (Mouse), this protein is Cyclic GMP-AMP synthase.